The following is a 468-amino-acid chain: 6-phosphogluconate dehydrogenase, decarboxylating (468 aa).

NADP(+)-binding positions include 10–15 (GMAVMG), 33–35 (NRT), 74–76 (VQS), and asparagine 102. Substrate is bound by residues asparagine 102 and 128 to 130 (SGG). Catalysis depends on lysine 182, which acts as the Proton acceptor. Substrate is bound at residue 185-186 (HN). The active-site Proton donor is glutamate 189. Positions 190, 259, 286, 445, and 451 each coordinate substrate.

The protein belongs to the 6-phosphogluconate dehydrogenase family. Homodimer.

The enzyme catalyses 6-phospho-D-gluconate + NADP(+) = D-ribulose 5-phosphate + CO2 + NADPH. Its pathway is carbohydrate degradation; pentose phosphate pathway; D-ribulose 5-phosphate from D-glucose 6-phosphate (oxidative stage): step 3/3. Its function is as follows. Catalyzes the oxidative decarboxylation of 6-phosphogluconate to ribulose 5-phosphate and CO(2), with concomitant reduction of NADP to NADPH. This chain is 6-phosphogluconate dehydrogenase, decarboxylating (gnd), found in Buchnera aphidicola subsp. Acyrthosiphon pisum (strain APS) (Acyrthosiphon pisum symbiotic bacterium).